Here is a 263-residue protein sequence, read N- to C-terminus: Cell division coordinator CpoB (263 aa).

An N-terminal signal peptide occupies residues 1-26; the sequence is MSSNFRHQLLSLSLLVGIAAPWAAFA. The stretch at 44 to 88 forms a coiled coil; that stretch reads QLERISNAHSQLLTQLQQQLSDNQSDIDSLRGQIQENQYQLNQVV. A compositionally biased stretch (low complexity) spans 106–123; sequence AAAQSTSGDQSGAAASTT. A disordered region spans residues 106–139; that stretch reads AAAQSTSGDQSGAAASTTPTADAGTANAGAPVKS. TPR repeat units lie at residues 143–176, 180–213, and 217–250; these read NTDYNAAIALVQDKSRQDDAMVAFQNFIKNYPDS, PNANYWLGQLNYNKGKKDDAAYYFASVVKNYPKS, and ADAMFKVGVIMQDKGDTAKAKAVYQQVISKYPGT.

The protein belongs to the CpoB family. In terms of assembly, homotrimer. Interacts directly with the central domain of TolA and with PBP1B. Binding to TolA disrupts the homotrimer to form a YbgF/TolA heterodimer with weak affinity. Forms a quaternary complex with PBP1B-LpoB and TolA.

It localises to the periplasm. Its function is as follows. Mediates coordination of peptidoglycan synthesis and outer membrane constriction during cell division. Promotes physical and functional coordination of the PBP1B-LpoB and Tol machines, and regulates PBP1B activity in response to Tol energy state. The sequence is that of Cell division coordinator CpoB from Escherichia coli (strain K12).